The primary structure comprises 485 residues: Aprataxin and PNK-like factor (485 aa).

Residues 1–84 form the FHA-like domain; the sequence is MSGGFELQPQ…CVLSTHSEME (84 aa). Phosphoserine; by ATM is present on Ser92. The interval 103 to 156 is disordered; that stretch reads EIPKSSSADLPDKTPSAPRRERSTETAKPQAAANNMSFIGESRDLSKQQPNPSE. The residue at position 125 (Ser125) is a Phosphoserine. Residues 157–166 carry the KBM motif; that stretch reads RKRILPAWML. Positions 206–348 are disordered; the sequence is GKKRLISSGS…VPNGSEENKV (143 aa). Composition is skewed to polar residues over residues 212 to 223, 237 to 249, and 286 to 309; these read SSGSSESTSAKQ, SIIS…QSFS, and KGSS…QSKS. A compositionally biased stretch (basic and acidic residues) spans 310–319; the sequence is FCDKPQKSHP. Residues Arg350, Tyr355, Tyr360, and Arg361 each contribute to the a glycoprotein site. The PBZ-type 1 zinc finger occupies 351 to 372; it reads TSCMYGANCYRKNPVHFQHFSH. The flexible linker stretch occupies residues 380 to 390; it reads GVNITCQDEAD. The segment at 393 to 414 adopts a PBZ-type 2 zinc-finger fold; sequence PECPYGASCYRKNPQHKIEYRH. Tyr397, Tyr402, and Arg403 together coordinate a glycoprotein. The segment at 420 to 470 is disordered; the sequence is RSISDEDDNVGQPNEYNLNDSFIDDEEEEYEPTDEDSDWEPEKEDLEKEDM. The span at 441–469 shows a compositional bias: acidic residues; sequence FIDDEEEEYEPTDEDSDWEPEKEDLEKED. The short motif at 449-473 is the NAP1L motif element; it reads YEPTDEDSDWEPEKEDLEKEDMEGL.

It belongs to the APLF family. As to quaternary structure, interacts with LIG4. Interacts with PARP1. Interacts with XRCC4. Interacts (via KBM motif) with XRCC5 and XRCC6; promoting recruitment to DNA damage sites. Interacts with XRCC1. Interacts (via C-terminal disordered region) with histones; interacts with histone H2A, H2B and H3-H4. Post-translationally, poly-ADP-ribosylated. In addition to binding non covalently poly-ADP-ribose via its PBZ-type zinc fingers, the protein is also covalently poly-ADP-ribosylated by PARP1. Phosphorylated in an ATM-dependent manner upon double-strand DNA break.

It localises to the nucleus. It is found in the chromosome. Its subcellular location is the cytoplasm. The protein resides in the cytosol. Functionally, histone chaperone involved in single-strand and double-strand DNA break repair. Recruited to sites of DNA damage through interaction with branched poly-ADP-ribose chains, a polymeric post-translational modification synthesized transiently at sites of chromosomal damage to accelerate DNA strand break repair reactions. Following recruitment to DNA damage sites, acts as a histone chaperone that mediates histone eviction during DNA repair and promotes recruitment of histone variant MACROH2A1. Also has a nuclease activity: displays apurinic-apyrimidinic (AP) endonuclease and 3'-5' exonuclease activities in vitro. Also able to introduce nicks at hydroxyuracil and other types of pyrimidine base damage. Together with PARP3, promotes the retention of the LIG4-XRCC4 complex on chromatin and accelerate DNA ligation during non-homologous end-joining (NHEJ). Also acts as a negative regulator of cell pluripotency by promoting histone exchange. Required for the embryo implantation during the epithelial to mesenchymal transition in females. The protein is Aprataxin and PNK-like factor (APLF) of Bos taurus (Bovine).